Here is a 451-residue protein sequence, read N- to C-terminus: UPF0210 protein NMCC_1554 (451 aa).

The protein belongs to the UPF0210 family. As to quaternary structure, homodimer.

This chain is UPF0210 protein NMCC_1554, found in Neisseria meningitidis serogroup C (strain 053442).